A 78-amino-acid chain; its full sequence is uncharacterized protein (78 aa).

Functionally, this protein may be involved in virus assembly. Essential for virus function. This is an uncharacterized protein from Sulfolobus spindle-shape virus 1 (SSV1).